Consider the following 436-residue polypeptide: AMSH-like protease (436 aa).

Met-1 bears the N-acetylmethionine mark. 2 positions are modified to phosphoserine: Ser-25 and Ser-242. The 129-residue stretch at 269–397 folds into the MPN domain; it reads VVLSRDLCHK…IFRLTNAGML (129 aa). Residues His-347, His-349, Asp-360, His-362, Cys-402, His-408, and His-410 each coordinate Zn(2+). The JAMM motif motif lies at 347-360; it reads HTHPTQTAFLSSVD.

The protein belongs to the peptidase M67C family. Zn(2+) is required as a cofactor. Ubiquitously expressed. Isoform 1 is widely expressed while isoform 2 is testis-specific.

Its function is as follows. Zinc metalloprotease that specifically cleaves 'Lys-63'-linked polyubiquitin chains. Acts as a positive regulator of the TORC1 signaling pathway by mediating 'Lys-63'-linked deubiquitination of SESN2, thereby inhibiting SESN2-interaction with the GATOR2 complex. Does not cleave 'Lys-48'-linked polyubiquitin chains. The protein is AMSH-like protease (Stambpl1) of Mus musculus (Mouse).